A 71-amino-acid chain; its full sequence is MSDKKTFEENLQELETIVSRLETGDVALEDAIAEFQKGMLISKELQRTLKEAEETLVKVMQADGTEVEMDT.

This sequence belongs to the XseB family. Heterooligomer composed of large and small subunits.

It is found in the cytoplasm. It carries out the reaction Exonucleolytic cleavage in either 5'- to 3'- or 3'- to 5'-direction to yield nucleoside 5'-phosphates.. Its function is as follows. Bidirectionally degrades single-stranded DNA into large acid-insoluble oligonucleotides, which are then degraded further into small acid-soluble oligonucleotides. This chain is Exodeoxyribonuclease 7 small subunit, found in Streptococcus agalactiae serotype Ia (strain ATCC 27591 / A909 / CDC SS700).